The sequence spans 561 residues: Arginine--tRNA ligase (561 aa).

A 'HIGH' region motif is present at residues Ala129–His139.

This sequence belongs to the class-I aminoacyl-tRNA synthetase family. As to quaternary structure, monomer.

It localises to the cytoplasm. It catalyses the reaction tRNA(Arg) + L-arginine + ATP = L-arginyl-tRNA(Arg) + AMP + diphosphate. The sequence is that of Arginine--tRNA ligase from Bordetella parapertussis (strain 12822 / ATCC BAA-587 / NCTC 13253).